The following is a 320-amino-acid chain: Polycomb complex protein BMI-1-A (320 aa).

An RING-type zinc finger spans residues 18 to 57 (CVLCGGYFIDATTIIECLHSFCKMCIVRYLETSKYCPICD). Residues 81–95 (KLVPGLFKNEMKRRR) carry the Nuclear localization signal motif. The segment at 234–320 (ITHPQEGLNN…ALNGSSTSSG (87 aa)) is disordered. Residues 262 to 281 (VPSTSSPLPSPSTLVQPSQP) show a composition bias toward low complexity. A compositionally biased stretch (polar residues) spans 285 to 304 (HISSPINGTTMTSPNRQFNF).

Component of a PRC1-like complex. Homodimer. Interacts with cbx2.

The protein resides in the nucleus. Functionally, component of a Polycomb group (PcG) multiprotein PRC1-like complex, a complex class required to maintain the transcriptionally repressive state of many genes, including Hox genes, throughout development. PcG PRC1 complex acts via chromatin remodeling and modification of histones; it mediates monoubiquitination of histone H2A 'Lys-119', rendering chromatin heritably changed in its expressibility. In the PRC1 complex, it is required to stimulate the E3 ubiquitin-protein ligase activity of rnf2. The protein is Polycomb complex protein BMI-1-A (bmi1a) of Danio rerio (Zebrafish).